Consider the following 418-residue polypeptide: Deubiquitinase and deneddylase Dub1 (418 aa).

Positions 1–10 are enriched in polar residues; the sequence is MLSPTNSISK. The segment at 1–23 is disordered; that stretch reads MLSPTNSISKTAPVPPQDSSKPV. Residues 40–60 traverse the membrane as a helical segment; sequence TALAVLLVVVTLGLILLFYSF. The disordered stretch occupies residues 72 to 144; that stretch reads TRPSTKEQPT…PLPPKAPKPV (73 aa). The span at 86–141 shows a compositional bias: pro residues; it reads VPLPSPPLAVPRPSTPPPPVISRPSTPPAPTPAISPPSTPSAPKPSTPPPLPPKAP. Catalysis depends on residues histidine 288, aspartate 305, and cysteine 358.

The protein belongs to the peptidase C48 family.

Its subcellular location is the secreted. The protein resides in the host cell. It is found in the membrane. In terms of biological role, effector proteins function to alter host cell physiology and promote bacterial survival in host tissues. This protease possesses deubiquitinating and deneddylating activities. The chain is Deubiquitinase and deneddylase Dub1 (cdu1) from Chlamydia trachomatis serovar B (strain TZ1A828/OT).